Reading from the N-terminus, the 89-residue chain is Large ribosomal subunit protein eL34 (89 aa).

The protein belongs to the eukaryotic ribosomal protein eL34 family.

In Methanocaldococcus jannaschii (strain ATCC 43067 / DSM 2661 / JAL-1 / JCM 10045 / NBRC 100440) (Methanococcus jannaschii), this protein is Large ribosomal subunit protein eL34 (rpl34e).